The following is a 502-amino-acid chain: Serine carboxypeptidase-like 40 (502 aa).

An N-terminal signal peptide occupies residues 1–24 (MRKGQGYSYSVIASVLVLLCVVVS). Residues Asn103 and Asn187 are each glycosylated (N-linked (GlcNAc...) asparagine). Intrachain disulfides connect Cys136/Cys384, Cys293/Cys307, and Cys331/Cys352. Ser229 is a catalytic residue. N-linked (GlcNAc...) asparagine glycosylation is found at Asn333 and Asn373. Residue Asp420 is part of the active site. Asn436 carries an N-linked (GlcNAc...) asparagine glycan. The active site involves His473.

It belongs to the peptidase S10 family. In terms of tissue distribution, expressed in roots, leaves, flowers and siliques.

Its subcellular location is the secreted. Probable carboxypeptidase. The sequence is that of Serine carboxypeptidase-like 40 (SCPL40) from Arabidopsis thaliana (Mouse-ear cress).